A 430-amino-acid polypeptide reads, in one-letter code: Histidinol dehydrogenase (430 aa).

NAD(+)-binding residues include Tyr-130, Gln-191, and Asn-214. The substrate site is built by Ser-237, Gln-259, and His-262. Zn(2+)-binding residues include Gln-259 and His-262. Active-site proton acceptor residues include Glu-327 and His-328. Substrate contacts are provided by His-328, Asp-361, Glu-415, and His-420. Asp-361 provides a ligand contact to Zn(2+). His-420 lines the Zn(2+) pocket.

It belongs to the histidinol dehydrogenase family. It depends on Zn(2+) as a cofactor.

The enzyme catalyses L-histidinol + 2 NAD(+) + H2O = L-histidine + 2 NADH + 3 H(+). It participates in amino-acid biosynthesis; L-histidine biosynthesis; L-histidine from 5-phospho-alpha-D-ribose 1-diphosphate: step 9/9. In terms of biological role, catalyzes the sequential NAD-dependent oxidations of L-histidinol to L-histidinaldehyde and then to L-histidine. The polypeptide is Histidinol dehydrogenase (Brucella abortus (strain 2308)).